The following is a 282-amino-acid chain: Bifunctional protein FolD (282 aa).

NADP(+)-binding positions include 166–168 (GAS) and I232.

The protein belongs to the tetrahydrofolate dehydrogenase/cyclohydrolase family. As to quaternary structure, homodimer.

It catalyses the reaction (6R)-5,10-methylene-5,6,7,8-tetrahydrofolate + NADP(+) = (6R)-5,10-methenyltetrahydrofolate + NADPH. It carries out the reaction (6R)-5,10-methenyltetrahydrofolate + H2O = (6R)-10-formyltetrahydrofolate + H(+). It functions in the pathway one-carbon metabolism; tetrahydrofolate interconversion. In terms of biological role, catalyzes the oxidation of 5,10-methylenetetrahydrofolate to 5,10-methenyltetrahydrofolate and then the hydrolysis of 5,10-methenyltetrahydrofolate to 10-formyltetrahydrofolate. The polypeptide is Bifunctional protein FolD (Haemophilus influenzae (strain PittGG)).